Consider the following 509-residue polypeptide: Steroid 17-alpha-hydroxylase/17,20 lyase (509 aa).

N202 is a binding site for substrate. C442 contributes to the heme binding site.

Belongs to the cytochrome P450 family. Heme serves as cofactor.

It is found in the endoplasmic reticulum membrane. The protein localises to the microsome membrane. The catalysed reaction is a C21-steroid + reduced [NADPH--hemoprotein reductase] + O2 = a 17alpha-hydroxy-C21-steroid + oxidized [NADPH--hemoprotein reductase] + H2O + H(+). The enzyme catalyses progesterone + reduced [NADPH--hemoprotein reductase] + O2 = 17alpha-hydroxyprogesterone + oxidized [NADPH--hemoprotein reductase] + H2O + H(+). It carries out the reaction pregnenolone + reduced [NADPH--hemoprotein reductase] + O2 = 17alpha-hydroxypregnenolone + oxidized [NADPH--hemoprotein reductase] + H2O + H(+). It catalyses the reaction 17alpha-hydroxyprogesterone + reduced [NADPH--hemoprotein reductase] + O2 = androst-4-ene-3,17-dione + acetate + oxidized [NADPH--hemoprotein reductase] + H2O + 2 H(+). The catalysed reaction is 17alpha-hydroxyprogesterone + reduced [NADPH--hemoprotein reductase] + O2 = 16alpha,17alpha-dihydroxyprogesterone + oxidized [NADPH--hemoprotein reductase] + H2O + H(+). The enzyme catalyses 16alpha,17alpha-dihydroxyprogesterone + reduced [NADPH--hemoprotein reductase] + O2 = 6beta,16alpha,17alpha-trihydroxyprogesterone + oxidized [NADPH--hemoprotein reductase] + H2O + H(+). It carries out the reaction 17alpha-hydroxypregnenolone + reduced [NADPH--hemoprotein reductase] + O2 = 3beta-hydroxyandrost-5-en-17-one + acetate + oxidized [NADPH--hemoprotein reductase] + H2O + 2 H(+). It catalyses the reaction 16alpha,17alpha-dihydroxypregnenolone + reduced [NADPH--hemoprotein reductase] + O2 = 3beta,16alpha-dihydroxy-androst-5-en-17-one + acetate + oxidized [NADPH--hemoprotein reductase] + H2O + 2 H(+). The catalysed reaction is 3beta-hydroxyandrost-5-en-17-one + reduced [NADPH--hemoprotein reductase] + O2 = 3beta,16alpha-dihydroxy-androst-5-en-17-one + oxidized [NADPH--hemoprotein reductase] + H2O + H(+). The enzyme catalyses androst-4-ene-3,17-dione + reduced [NADPH--hemoprotein reductase] + O2 = 16alpha-hydroxyandrost-4-ene-3,17-dione + oxidized [NADPH--hemoprotein reductase] + H2O + H(+). It functions in the pathway steroid hormone biosynthesis. It participates in steroid biosynthesis; glucocorticoid biosynthesis. Regulated predominantly by intracellular cAMP levels. The 17,20-lyase activity is stimulated by cytochrome b5, which acts as an allosteric effector increasing the Vmax of the lyase activity. Its function is as follows. A cytochrome P450 monooxygenase involved in corticoid and androgen biosynthesis. Catalyzes 17-alpha hydroxylation of C21 steroids, which is common for both pathways. A second oxidative step, required only for androgen synthesis, involves an acyl-carbon cleavage. The 17-alpha hydroxy intermediates, as part of adrenal glucocorticoids biosynthesis pathway, are precursors of cortisol. Hydroxylates steroid hormones, pregnenolone and progesterone to form 17-alpha hydroxy metabolites, followed by the cleavage of the C17-C20 bond to form C19 steroids, dehydroepiandrosterone (DHEA) and androstenedione. Has 16-alpha hydroxylase activity. Catalyzes 16-alpha hydroxylation of 17-alpha hydroxy pregnenolone, followed by the cleavage of the C17-C20 bond to form 16-alpha-hydroxy DHEA. Also 16-alpha hydroxylates androgens, relevant for estriol synthesis. Mechanistically, uses molecular oxygen inserting one oxygen atom into a substrate, and reducing the second into a water molecule, with two electrons provided by NADPH via cytochrome P450 reductase (CPR; NADPH-ferrihemoprotein reductase). In Sus scrofa (Pig), this protein is Steroid 17-alpha-hydroxylase/17,20 lyase (CYP17A1).